We begin with the raw amino-acid sequence, 428 residues long: Adenylosuccinate synthetase (428 aa).

GTP is bound by residues 12-18 (GDEGKGK) and 40-42 (GHS). Asp13 functions as the Proton acceptor in the catalytic mechanism. Asp13 and Gly40 together coordinate Mg(2+). Residues 13 to 16 (DEGK), 38 to 41 (NAGH), Thr128, Arg142, Gln223, Thr238, and Arg302 contribute to the IMP site. Residue His41 is the Proton donor of the active site. 298–304 (VTTGRPR) contacts substrate. Residues Arg304, 330-332 (KLD), and 412-414 (GTG) contribute to the GTP site.

It belongs to the adenylosuccinate synthetase family. Homodimer. The cofactor is Mg(2+).

Its subcellular location is the cytoplasm. The enzyme catalyses IMP + L-aspartate + GTP = N(6)-(1,2-dicarboxyethyl)-AMP + GDP + phosphate + 2 H(+). The protein operates within purine metabolism; AMP biosynthesis via de novo pathway; AMP from IMP: step 1/2. Plays an important role in the de novo pathway of purine nucleotide biosynthesis. Catalyzes the first committed step in the biosynthesis of AMP from IMP. The protein is Adenylosuccinate synthetase of Bifidobacterium longum (strain NCC 2705).